We begin with the raw amino-acid sequence, 250 residues long: uncharacterized protein (250 aa).

A divalent metal cation is bound by residues Glu97, Glu99, and Asp128.

This sequence belongs to the FAH family.

This is an uncharacterized protein from Archaeoglobus fulgidus (strain ATCC 49558 / DSM 4304 / JCM 9628 / NBRC 100126 / VC-16).